We begin with the raw amino-acid sequence, 402 residues long: tRNA(Met) cytidine acetate ligase (402 aa).

Residues 7-20 (ITEYNPFHLGHELH), Gly102, Asn171, and Arg196 each bind ATP.

Belongs to the TmcAL family.

It is found in the cytoplasm. It carries out the reaction cytidine(34) in elongator tRNA(Met) + acetate + ATP = N(4)-acetylcytidine(34) in elongator tRNA(Met) + AMP + diphosphate. Catalyzes the formation of N(4)-acetylcytidine (ac(4)C) at the wobble position of elongator tRNA(Met), using acetate and ATP as substrates. First activates an acetate ion to form acetyladenylate (Ac-AMP) and then transfers the acetyl group to tRNA to form ac(4)C34. The chain is tRNA(Met) cytidine acetate ligase from Clostridium perfringens (strain SM101 / Type A).